We begin with the raw amino-acid sequence, 427 residues long: Trigger factor (427 aa).

The region spanning G160–P240 is the PPIase FKBP-type domain.

This sequence belongs to the FKBP-type PPIase family. Tig subfamily.

It localises to the cytoplasm. The enzyme catalyses [protein]-peptidylproline (omega=180) = [protein]-peptidylproline (omega=0). Functionally, involved in protein export. Acts as a chaperone by maintaining the newly synthesized protein in an open conformation. Functions as a peptidyl-prolyl cis-trans isomerase. This Chlorobaculum parvum (strain DSM 263 / NCIMB 8327) (Chlorobium vibrioforme subsp. thiosulfatophilum) protein is Trigger factor.